The following is a 219-amino-acid chain: Germin-like protein subfamily 2 member 1 (219 aa).

The first 21 residues, 1-21 (MASPTLTLLLLLTTVSFFISS), serve as a signal peptide directing secretion. Cysteine 32 and cysteine 47 are oxidised to a cystine. Residues 61–209 (QGLAKPGLTN…AFQTSPGTVK (149 aa)) enclose the Cupin type-1 domain. N-linked (GlcNAc...) asparagine glycosylation is present at asparagine 70. Residues histidine 109, histidine 111, glutamate 116, and histidine 155 each coordinate Mn(2+).

It belongs to the germin family. In terms of assembly, oligomer (believed to be a pentamer but probably hexamer).

Its subcellular location is the secreted. It localises to the extracellular space. The protein localises to the apoplast. Its function is as follows. May play a role in plant defense. Probably has no oxalate oxidase activity even if the active site is conserved. The protein is Germin-like protein subfamily 2 member 1 (GLP4) of Arabidopsis thaliana (Mouse-ear cress).